Here is a 194-residue protein sequence, read N- to C-terminus: Peptidyl-tRNA hydrolase (194 aa).

Tyrosine 16 contributes to the tRNA binding site. Histidine 21 (proton acceptor) is an active-site residue. TRNA contacts are provided by phenylalanine 67, asparagine 69, and asparagine 115.

This sequence belongs to the PTH family. In terms of assembly, monomer.

The protein resides in the cytoplasm. It carries out the reaction an N-acyl-L-alpha-aminoacyl-tRNA + H2O = an N-acyl-L-amino acid + a tRNA + H(+). In terms of biological role, hydrolyzes ribosome-free peptidyl-tRNAs (with 1 or more amino acids incorporated), which drop off the ribosome during protein synthesis, or as a result of ribosome stalling. Functionally, catalyzes the release of premature peptidyl moieties from peptidyl-tRNA molecules trapped in stalled 50S ribosomal subunits, and thus maintains levels of free tRNAs and 50S ribosomes. The polypeptide is Peptidyl-tRNA hydrolase (Citrobacter koseri (strain ATCC BAA-895 / CDC 4225-83 / SGSC4696)).